The primary structure comprises 235 residues: MADNIINAQRREEKGKGPARRLRQKGLIPAVVYGRKQEPTHLSVDPASLLKAIETPHKFNTLLTLKLDGAEKHVLFKDWAVDPVSRKLEHADFLEVKLDEAVKVAVPVVTSGRSVGQAEGGILSLATHEVVLEALPSKIPVRIEVDVTNLKIGQSIHVSQLTPPEGCKLKYSSDYVIAFVAVPEKEEVAAPVAAAVPGAAPAEGAAAAGAPAAGAAPAAGGEAAKKAPEAKGAKK.

Disordered stretches follow at residues 1-21 (MADNIINAQRREEKGKGPARR) and 210-235 (APAAGAAPAAGGEAAKKAPEAKGAKK). The segment covering 210 to 222 (APAAGAAPAAGGE) has biased composition (low complexity). The span at 223–235 (AAKKAPEAKGAKK) shows a compositional bias: basic and acidic residues.

The protein belongs to the bacterial ribosomal protein bL25 family. CTC subfamily. As to quaternary structure, part of the 50S ribosomal subunit; part of the 5S rRNA/L5/L18/L25 subcomplex. Contacts the 5S rRNA. Binds to the 5S rRNA independently of L5 and L18.

Functionally, this is one of the proteins that binds to the 5S RNA in the ribosome where it forms part of the central protuberance. This Anaeromyxobacter sp. (strain Fw109-5) protein is Large ribosomal subunit protein bL25.